Consider the following 372-residue polypeptide: Anhydro-N-acetylmuramic acid kinase (372 aa).

Glycine 21–aspartate 28 provides a ligand contact to ATP.

Belongs to the anhydro-N-acetylmuramic acid kinase family.

It catalyses the reaction 1,6-anhydro-N-acetyl-beta-muramate + ATP + H2O = N-acetyl-D-muramate 6-phosphate + ADP + H(+). It participates in amino-sugar metabolism; 1,6-anhydro-N-acetylmuramate degradation. Its pathway is cell wall biogenesis; peptidoglycan recycling. Functionally, catalyzes the specific phosphorylation of 1,6-anhydro-N-acetylmuramic acid (anhMurNAc) with the simultaneous cleavage of the 1,6-anhydro ring, generating MurNAc-6-P. Is required for the utilization of anhMurNAc either imported from the medium or derived from its own cell wall murein, and thus plays a role in cell wall recycling. The polypeptide is Anhydro-N-acetylmuramic acid kinase (Bordetella avium (strain 197N)).